The sequence spans 285 residues: Kanamycin B dioxygenase (285 aa).

It belongs to the PhyH family. Fe cation serves as cofactor.

The catalysed reaction is kanamycin B + 2-oxoglutarate + O2 = 2'-dehydrokanamycin A + succinate + NH4(+) + CO2. It participates in antibiotic biosynthesis; kanamycin biosynthesis. In terms of biological role, mediates the conversion of kanamycin B into 2'-dehydrokanamycin A during the transformation of kanamycin B to kanamycin A. The protein is Kanamycin B dioxygenase (kanJ) of Streptomyces kanamyceticus.